Reading from the N-terminus, the 224-residue chain is Cytidylate kinase (224 aa).

An ATP-binding site is contributed by 9–17 (GPSGSGKGT).

The protein belongs to the cytidylate kinase family. Type 1 subfamily.

The protein localises to the cytoplasm. It carries out the reaction CMP + ATP = CDP + ADP. It catalyses the reaction dCMP + ATP = dCDP + ADP. In Saccharophagus degradans (strain 2-40 / ATCC 43961 / DSM 17024), this protein is Cytidylate kinase.